A 342-amino-acid chain; its full sequence is Anthranilate phosphoribosyltransferase (342 aa).

5-phospho-alpha-D-ribose 1-diphosphate-binding positions include Gly83, 86–87 (GD), Thr91, 93–96 (NIST), 111–119 (KHGGRSVSS), and Ser123. Gly83 is an anthranilate binding site. Ser95 provides a ligand contact to Mg(2+). Arg169 provides a ligand contact to anthranilate. Asp228 and Glu229 together coordinate Mg(2+).

The protein belongs to the anthranilate phosphoribosyltransferase family. Homodimer. It depends on Mg(2+) as a cofactor.

The catalysed reaction is N-(5-phospho-beta-D-ribosyl)anthranilate + diphosphate = 5-phospho-alpha-D-ribose 1-diphosphate + anthranilate. It functions in the pathway amino-acid biosynthesis; L-tryptophan biosynthesis; L-tryptophan from chorismate: step 2/5. Functionally, catalyzes the transfer of the phosphoribosyl group of 5-phosphorylribose-1-pyrophosphate (PRPP) to anthranilate to yield N-(5'-phosphoribosyl)-anthranilate (PRA). The sequence is that of Anthranilate phosphoribosyltransferase from Laribacter hongkongensis (strain HLHK9).